The chain runs to 110 residues: Large ribosomal subunit protein uL22 (110 aa).

Belongs to the universal ribosomal protein uL22 family. In terms of assembly, part of the 50S ribosomal subunit.

Its function is as follows. This protein binds specifically to 23S rRNA; its binding is stimulated by other ribosomal proteins, e.g. L4, L17, and L20. It is important during the early stages of 50S assembly. It makes multiple contacts with different domains of the 23S rRNA in the assembled 50S subunit and ribosome. Functionally, the globular domain of the protein is located near the polypeptide exit tunnel on the outside of the subunit, while an extended beta-hairpin is found that lines the wall of the exit tunnel in the center of the 70S ribosome. In Acinetobacter baumannii (strain ACICU), this protein is Large ribosomal subunit protein uL22.